The primary structure comprises 486 residues: MTQFIKGQWVAGLGHAVTSKNPANNDVIWNSQTATPEQVNTAVEAAREVQFDWFMLGFEARLAIVEAYRAQLEENKAEIAETIAQETGKPQWETATEAGAMIGKIGLSVAAYNKRTGTSENDTPAGRAVLRHKPHGVVAVFGPYNFPGHLPNGHIVPALLAGNTVVFKPSELTPKVAELMLKLWEKAGLPAGVINLVQGEVETGKALASHPQIDGLFFTGSSRTGHILHQQYAGEPGKILALEMGGNNPLIIKGVKDSKAAVHDIIQSAYISSGQRCTCARRLYVEKGAEGDALLAQLTDAVKRIVVGAWNAQPQPFMGAMISETAAKGMVEAQRNLVNLGGHSLVELTHIEEGTGLVSPGLIDVSQVIELPDEEYFGPLLQVVRYTDFDEAIKLANNTRYGLSAGILADSRDDYEYFLARIRAGIVNWNKQITGASGAAPFGGVGASGNHRASAFYAADYCAYPVASVEADEVSLPANLSPGLSL.

220-225 contacts NAD(+); that stretch reads GSSRTG. Catalysis depends on residues glutamate 243 and cysteine 277.

Belongs to the aldehyde dehydrogenase family. AstD subfamily.

It carries out the reaction N-succinyl-L-glutamate 5-semialdehyde + NAD(+) + H2O = N-succinyl-L-glutamate + NADH + 2 H(+). It participates in amino-acid degradation; L-arginine degradation via AST pathway; L-glutamate and succinate from L-arginine: step 4/5. Its function is as follows. Catalyzes the NAD-dependent reduction of succinylglutamate semialdehyde into succinylglutamate. The protein is N-succinylglutamate 5-semialdehyde dehydrogenase of Shewanella sediminis (strain HAW-EB3).